Here is a 161-residue protein sequence, read N- to C-terminus: Nucleotide-binding protein Pput_4372 (161 aa).

This sequence belongs to the YajQ family.

Its function is as follows. Nucleotide-binding protein. In Pseudomonas putida (strain ATCC 700007 / DSM 6899 / JCM 31910 / BCRC 17059 / LMG 24140 / F1), this protein is Nucleotide-binding protein Pput_4372.